Reading from the N-terminus, the 184-residue chain is Isopentenyl-diphosphate Delta-isomerase (184 aa).

Mn(2+)-binding residues include histidine 26 and histidine 33. One can recognise a Nudix hydrolase domain in the interval 31–165 (PLHLAFSCYL…PSAFSPWLGL (135 aa)). Cysteine 68 is a catalytic residue. Histidine 70 serves as a coordination point for Mn(2+). Residue glutamate 88 participates in Mg(2+) binding. Residues glutamate 115 and glutamate 117 each contribute to the Mn(2+) site. The active site involves glutamate 117.

It belongs to the IPP isomerase type 1 family. It depends on Mg(2+) as a cofactor. Mn(2+) serves as cofactor.

It is found in the cytoplasm. It carries out the reaction isopentenyl diphosphate = dimethylallyl diphosphate. It functions in the pathway isoprenoid biosynthesis; dimethylallyl diphosphate biosynthesis; dimethylallyl diphosphate from isopentenyl diphosphate: step 1/1. In terms of biological role, catalyzes the 1,3-allylic rearrangement of the homoallylic substrate isopentenyl (IPP) to its highly electrophilic allylic isomer, dimethylallyl diphosphate (DMAPP). This is Isopentenyl-diphosphate Delta-isomerase from Paenarthrobacter aurescens (strain TC1).